The primary structure comprises 261 residues: tRNA threonylcarbamoyladenosine dehydratase (261 aa).

Residues 230 to 250 (CANGFGAATMITATFGFFAVS) form a helical membrane-spanning segment.

The protein belongs to the HesA/MoeB/ThiF family.

It is found in the membrane. Its function is as follows. Catalyzes the ATP-dependent dehydration of threonylcarbamoyladenosine at position 37 (t(6)A37) to form cyclic t(6)A37 (ct(6)A37) in tRNAs that read codons beginning with adenine. The chain is tRNA threonylcarbamoyladenosine dehydratase (tcdA) from Haemophilus influenzae (strain ATCC 51907 / DSM 11121 / KW20 / Rd).